Here is a 432-residue protein sequence, read N- to C-terminus: Glutamate-1-semialdehyde 2,1-aminomutase (432 aa).

An N6-(pyridoxal phosphate)lysine modification is found at K265.

The protein belongs to the class-III pyridoxal-phosphate-dependent aminotransferase family. HemL subfamily. As to quaternary structure, homodimer. Pyridoxal 5'-phosphate is required as a cofactor.

It is found in the cytoplasm. The catalysed reaction is (S)-4-amino-5-oxopentanoate = 5-aminolevulinate. It functions in the pathway porphyrin-containing compound metabolism; protoporphyrin-IX biosynthesis; 5-aminolevulinate from L-glutamyl-tRNA(Glu): step 2/2. The chain is Glutamate-1-semialdehyde 2,1-aminomutase from Vibrio cholerae serotype O1 (strain ATCC 39541 / Classical Ogawa 395 / O395).